Reading from the N-terminus, the 58-residue chain is Large ribosomal subunit protein bL32 (58 aa).

The protein belongs to the bacterial ribosomal protein bL32 family.

This is Large ribosomal subunit protein bL32 from Prochlorococcus marinus (strain MIT 9303).